Consider the following 505-residue polypeptide: Cyclic AMP-dependent transcription factor ATF-2 (505 aa).

Residues 1–7 (MKFKLHV) carry the Nuclear export signal 1 (N-NES) motif. The C2H2-type zinc-finger motif lies at 25 to 49 (FLCTAPGCGQRFTNEDHLAVHKHKH). T52 is modified (phosphothreonine; by PKC/PRKCH). A Phosphoserine; by VRK1 modification is found at S62. T69 carries the phosphothreonine; by MAPK11 and MAPK14 modification. Position 71 is a phosphothreonine; by MAPK1, MAPK3, MAPK11, MAPK12, MAPK14 and PLK3 (T71). T73 carries the post-translational modification Phosphothreonine; by VRK1. Phosphoserine is present on residues S90 and S112. Phosphothreonine is present on T116. Position 121 is a phosphoserine; by PKC/PRKCA and PKC/PRKCB (S121). Disordered regions lie at residues 125 to 155 (EPSV…PLAQ) and 259 to 373 (PGIP…RQKR). A Phosphoserine modification is found at S136. Positions 282–293 (LTQQHPPVTNGD) are enriched in polar residues. An essential for its histone acetyltransferase activity region spans residues 296-299 (KGHG). A compositionally biased stretch (low complexity) spans 318–334 (PATSTTETPASPAHTTP). S328 carries the post-translational modification Phosphoserine. S340 carries the phosphoserine; by PKC/PRKCA and PKC/PRKCB modification. The segment covering 346-363 (AANEDPDEKRRKFLERNR) has biased composition (basic and acidic residues). The region spanning 352–415 (DEKRRKFLER…AQLKQLLLAH (64 aa)) is the bZIP domain. The segment at 354 to 374 (KRRKFLERNRAAASRCRQKRK) is basic motif. Position 357 is an N6-acetyllysine (K357). At S367 the chain carries Phosphoserine; by PKC/PRKCA and PKC/PRKCB. K374 carries the N6-acetyllysine modification. Residues 380 to 408 (LEKKAEDLSSLNGQLQSEVTLLRNEVAQL) are leucine-zipper. Residues 405–414 (VAQLKQLLLA) carry the Nuclear export signal 2 (C-NES) motif. The interval 425–472 (KKSGYHTADKDDSSEDISVPSSPHTEAIQHSSVSTSNGVSSTSKAEAV) is disordered. A phosphoserine mark is found at S442 and S446. Polar residues predominate over residues 443–454 (VPSSPHTEAIQH). Residues 455-467 (SSVSTSNGVSSTS) are compositionally biased toward low complexity. Phosphoserine; by ATM is present on residues S490 and S498.

It belongs to the bZIP family. ATF subfamily. Binds DNA as a dimer and can form a homodimer in the absence of DNA. Can form a heterodimer with JUN. Heterodimerization is essential for its transcriptional activity. Interacts with SMAD3 and SMAD4. Binds through its N-terminal region to UTF1 which acts as a coactivator of ATF2 transcriptional activity. Interacts with the HK1/VDAC1 complex. Interacts with NBN, MRE11, XPO1, KAT5 and CUL3. Phosphorylation of Thr-69 by MAPK14 and MAPK11, and at Thr-71 by MAPK1/ERK2, MAPK3/ERK1, MAPK11, MAPK12 and MAPK14 in response to external stimulus like insulin causes increased transcriptional activity. Phosphorylated by PLK3 following hyperosmotic stress. Also phosphorylated and activated by JNK and CaMK4. ATM-mediated phosphorylation at Ser-490 and Ser-498 stimulates its function in DNA damage response. Phosphorylation at Ser-62, Thr-73 and Ser-121 activates its transcriptional activity. Phosphorylation at Thr-69 or Thr-71 enhances acetylation of histones H2B and H4. Ubiquitously expressed, with more abundant expression in the brain.

It is found in the nucleus. It localises to the cytoplasm. The protein localises to the mitochondrion outer membrane. Its function is as follows. Transcriptional activator which regulates the transcription of various genes, including those involved in anti-apoptosis, cell growth, and DNA damage response. Dependent on its binding partner, binds to CRE (cAMP response element) consensus sequences (5'-TGACGTCA-3') or to AP-1 (activator protein 1) consensus sequences (5'-TGACTCA-3'). In the nucleus, contributes to global transcription and the DNA damage response, in addition to specific transcriptional activities that are related to cell development, proliferation and death. In the cytoplasm, interacts with and perturbs HK1- and VDAC1-containing complexes at the mitochondrial outer membrane, thereby impairing mitochondrial membrane potential, inducing mitochondrial leakage and promoting cell death. The phosphorylated form (mediated by ATM) plays a role in the DNA damage response and is involved in the ionizing radiation (IR)-induced S phase checkpoint control and in the recruitment of the MRN complex into the IR-induced foci (IRIF). Exhibits histone acetyltransferase (HAT) activity which specifically acetylates histones H2B and H4 in vitro. In concert with CUL3 and RBX1, promotes the degradation of KAT5 thereby attenuating its ability to acetylate and activate ATM. Can elicit oncogenic or tumor suppressor activities depending on the tissue or cell type. The chain is Cyclic AMP-dependent transcription factor ATF-2 (ATF2) from Homo sapiens (Human).